Here is a 245-residue protein sequence, read N- to C-terminus: Small ribosomal subunit protein uS2 (245 aa).

The protein belongs to the universal ribosomal protein uS2 family.

This is Small ribosomal subunit protein uS2 from Pseudomonas fluorescens (strain ATCC BAA-477 / NRRL B-23932 / Pf-5).